Reading from the N-terminus, the 193-residue chain is Probable oligoribonuclease (193 aa).

The 163-residue stretch at 15–177 (IIWIDCEMTG…DDIMESIAEL (163 aa)) folds into the Exonuclease domain. Tyr136 is a catalytic residue.

This sequence belongs to the oligoribonuclease family.

In terms of biological role, 3'-to-5' exoribonuclease specific for small oligoribonucleotides. This Caenorhabditis elegans protein is Probable oligoribonuclease.